Here is a 130-residue protein sequence, read N- to C-terminus: Small ribosomal subunit protein eS17 (130 aa).

Positions 74–84 are enriched in basic and acidic residues; that stretch reads QEEERERRDNY. The tract at residues 74-97 is disordered; that stretch reads QEEERERRDNYMPEISTVDPSQLT.

This sequence belongs to the eukaryotic ribosomal protein eS17 family.

The protein is Small ribosomal subunit protein eS17 (rps-17) of Caenorhabditis elegans.